Here is a 269-residue protein sequence, read N- to C-terminus: Gem-associated protein 2 (269 aa).

Residues serine 70 and serine 155 each carry the phosphoserine modification.

Belongs to the gemin-2 family. In terms of assembly, monomer. Part of the core SMN complex that contains SMN1, GEMIN2/SIP1, DDX20/GEMIN3, GEMIN4, GEMIN5, GEMIN6, GEMIN7, GEMIN8 and STRAP/UNRIP. Part of the SMN-Sm complex that contains SMN1, GEMIN2/SIP1, DDX20/GEMIN3, GEMIN4, GEMIN5, GEMIN6, GEMIN7, GEMIN8, STRAP/UNRIP and the Sm proteins SNRPB, SNRPD1, SNRPD2, SNRPD3, SNRPE, SNRPF and SNRPG. Interacts with GEMIN5; the interaction is direct. Interacts (via C-terminus) with SMN1; the interaction is direct. Interacts with SNRPD1; the interaction is direct. Interacts with SNRPD2; the interaction is direct. Interacts (via N-terminus) with SNRPF; the interaction is direct. Interacts (via N-terminus) with SNRPE; the interaction is direct. Interacts (via N-terminus) with SNRPG; the interaction is direct.

Its subcellular location is the nucleus. It localises to the gem. The protein resides in the cytoplasm. Its function is as follows. The SMN complex catalyzes the assembly of small nuclear ribonucleoproteins (snRNPs), the building blocks of the spliceosome, and thereby plays an important role in the splicing of cellular pre-mRNAs. Most spliceosomal snRNPs contain a common set of Sm proteins SNRPB, SNRPD1, SNRPD2, SNRPD3, SNRPE, SNRPF and SNRPG that assemble in a heptameric protein ring on the Sm site of the small nuclear RNA to form the core snRNP (Sm core). In the cytosol, the Sm proteins SNRPD1, SNRPD2, SNRPE, SNRPF and SNRPG (5Sm) are trapped in an inactive 6S pICln-Sm complex by the chaperone CLNS1A that controls the assembly of the core snRNP. To assemble core snRNPs, the SMN complex accepts the trapped 5Sm proteins from CLNS1A. Binding of snRNA inside 5Sm ultimately triggers eviction of the SMN complex, thereby allowing binding of SNRPD3 and SNRPB to complete assembly of the core snRNP. Within the SMN complex, GEMIN2 constrains the conformation of 5Sm, thereby promoting 5Sm binding to snRNA containing the snRNP code (a nonameric Sm site and a 3'-adjacent stem-loop), thus preventing progression of assembly until a cognate substrate is bound. This is Gem-associated protein 2 from Mus musculus (Mouse).